A 152-amino-acid polypeptide reads, in one-letter code: Endoribonuclease YbeY (152 aa).

Positions 118, 122, and 128 each coordinate Zn(2+).

This sequence belongs to the endoribonuclease YbeY family. It depends on Zn(2+) as a cofactor.

Its subcellular location is the cytoplasm. Single strand-specific metallo-endoribonuclease involved in late-stage 70S ribosome quality control and in maturation of the 3' terminus of the 16S rRNA. The protein is Endoribonuclease YbeY of Lacticaseibacillus paracasei (strain ATCC 334 / BCRC 17002 / CCUG 31169 / CIP 107868 / KCTC 3260 / NRRL B-441) (Lactobacillus paracasei).